Reading from the N-terminus, the 742-residue chain is Zinc finger MYND domain-containing protein 15 (742 aa).

Positions 109–199 (LEDGEEGEEE…QKRKGQRSEA (91 aa)) are disordered. A compositionally biased stretch (acidic residues) spans 110 to 127 (EDGEEGEEEEEEDEEEEK). Over residues 151-161 (SRESPQETNPP) the composition is skewed to polar residues. Positions 166–189 (EAAREAGGGKDGCREDRVENETRP) are enriched in basic and acidic residues. Zn(2+)-binding residues include Cys313, Cys316, Cys328, Cys331, Cys337, Cys341, His355, and Cys359. The segment at 313–359 (CHVCHRHSFEAKLTPCPQCSAVLYCGEACLRADWQRCPDDVSHRFWC) adopts an MYND-type zinc-finger fold. 2 disordered regions span residues 565 to 590 (EVSV…GRRD) and 701 to 742 (QGSG…RRRK). A compositionally biased stretch (pro residues) spans 708-724 (APGPPPPSPTPSAPPAP). The span at 725–742 (TRRRRGEKKPGRGARRRK) shows a compositional bias: basic residues.

As to quaternary structure, interacts with HDAC1, HDAC3, HDAC6 and, to a lesser extent, with HDAC7.

Its subcellular location is the nucleus. It is found in the cytoplasm. Acts as a transcriptional repressor through interaction with histone deacetylases (HDACs). May be important for spermiogenesis. The sequence is that of Zinc finger MYND domain-containing protein 15 (ZMYND15) from Homo sapiens (Human).